The primary structure comprises 474 residues: Aspartate ammonia-lyase (474 aa).

Positions 105, 144, 145, 146, and 191 each coordinate L-aspartate. The segment at 322 to 331 (GSSIMPGKVN) is SS loop. The Proton acceptor role is filled by Ser323. L-aspartate contacts are provided by Ser324 and Lys329.

This sequence belongs to the class-II fumarase/aspartase family. Aspartase subfamily. In terms of assembly, homotetramer.

The catalysed reaction is L-aspartate = fumarate + NH4(+). Functionally, lyase involved in the degradation of canavanine, the delta-oxa-analog of arginine, allowing growth on canavanine as sole nitrogen and carbon source. Probably catalyzes the conversion of L-aspartate to fumarate and ammonia. The polypeptide is Aspartate ammonia-lyase (Pseudomonas canavaninivorans).